The sequence spans 200 residues: Oligoribonuclease (200 aa).

One can recognise an Exonuclease domain in the interval 5–169 (MVWIDCEMTG…ADIRESIAEL (165 aa)). The active site involves Y126.

Belongs to the oligoribonuclease family.

The protein resides in the cytoplasm. Its function is as follows. 3'-to-5' exoribonuclease specific for small oligoribonucleotides. The chain is Oligoribonuclease from Streptomyces avermitilis (strain ATCC 31267 / DSM 46492 / JCM 5070 / NBRC 14893 / NCIMB 12804 / NRRL 8165 / MA-4680).